The following is a 1002-amino-acid chain: Glutamate receptor ionotropic, NMDA 3B (1002 aa).

A signal peptide spans 1 to 24 (MESVRTLWLSVALALAVGSRVVRG). Residues 25 to 574 (HPQPCRVPTR…PIGAFMWPLH (550 aa)) lie on the Extracellular side of the membrane. 5 N-linked (GlcNAc...) asparagine glycosylation sites follow: N69, N212, N344, N451, and N465. Intrachain disulfides connect C439-C475 and C445-C476. Glycine contacts are provided by S531, S533, and R538. S533 and R538 together coordinate D-serine. Residues 575-594 (WSMWVGVFAALHLTALFLTL) traverse the membrane as a helical segment. Topologically, residues 595–615 (YEWRSPYGLTPRGRNRGTVFS) are cytoplasmic. The discontinuously helical intramembrane region spans 616 to 627 (YSSALNLCYAIL). The Cytoplasmic portion of the chain corresponds to 628–641 (FGRTVSSKTPKCPT). The chain crosses the membrane as a helical span at residues 642–661 (GRFLMNLWAIFCLLVLSSYT). The Extracellular segment spans residues 662–832 (ANLAAVMVGD…TLQMGVYHFS (171 aa)). Position 701 (S701) interacts with glycine. D-serine-binding residues include S701, A702, and D745. D745 contributes to the glycine binding site. Residue N786 is glycosylated (N-linked (GlcNAc...) asparagine). Residues 833–848 (GLFVLLCLGLGSALLT) traverse the membrane as a helical segment. At 849–1002 (SLGEHVFYRL…RLLHAAPAES (154 aa)) the chain is on the cytoplasmic side. The tract at residues 882-910 (ALNTGPPEGQQERAEQERSGPKDELPATD) is disordered. The span at 891–906 (QQERAEQERSGPKDEL) shows a compositional bias: basic and acidic residues. Positions 944-985 (LCSNGPGLQAELRELELRIEAARERLRSALLRRGELRALLGD) form a coiled coil. An involved in the trafficking and surface expression of NMDARs region spans residues 951 to 984 (LQAELRELELRIEAARERLRSALLRRGELRALLG).

It belongs to the glutamate-gated ion channel (TC 1.A.10.1) family. NR3B/GRIN3B subfamily. As to quaternary structure, forms heterotetrameric channels that contain at least two GluN1 subunits and at least a combination of one GluN2 and one GluN3 subunits (in vitro). Forms heterotetrameric channels composed of two GluN1/zeta subunits (GRIN1), and two identical GluN3 subunits (GRIN3A or GRIN3B) (in vitro). Does not form functional homomeric channels. In terms of tissue distribution, expressed in the hippocampus, the corpus callosum, in the facial and trigeminal nuclei of the brainstem and the ventral horn of the spinal cord.

The protein localises to the cell membrane. It is found in the postsynaptic cell membrane. It carries out the reaction Ca(2+)(in) = Ca(2+)(out). It catalyses the reaction Na(+)(in) = Na(+)(out). With respect to regulation, excitatory glycine receptors are inhibited by D-serine at a concentrion of 100uM. Functionally, component of a non-conventional N-methyl-D-aspartate (NMDA) receptors (NMDARs) that function as heterotetrameric, ligand-gated cation channels with low calcium permeability and low voltage-dependent block by Mg(2+). Forms glutamatergic receptor complexes with GluN1 and GluN2 subunits which are activated by glycine binding to the GluN1 and GluN3 subunits and L-glutamate binding to GluN2 subunits. Forms excitatory glycinergic receptor complexes with GluN1 alone which are activated by glycine binding to the GluN1 and GluN3 subunits. GluN3B subunit also binds D-serine and, in the absence of glycine, activates glycinergic receptor complexes, but with lower efficacy than glycine. Each GluN3 subunit confers differential attributes to channel properties, including activation, deactivation and desensitization kinetics, pH sensitivity, Ca2(+) permeability, and binding to allosteric modulators. The protein is Glutamate receptor ionotropic, NMDA 3B of Rattus norvegicus (Rat).